Here is a 97-residue protein sequence, read N- to C-terminus: Essential MCU regulator, mitochondrial (97 aa).

A mitochondrion-targeting transit peptide spans 1 to 35; the sequence is MIVPRLALPISLALQRVSRRVAEHPHNLRILQRHM. A helical transmembrane segment spans residues 53–73; sequence PFGLLAIFCAVIPGLFVGATI.

The protein belongs to the SMDT1/EMRE family.

The protein localises to the mitochondrion inner membrane. Essential regulatory subunit of the mitochondrial calcium uniporter MCU channel, a protein that mediates calcium uptake into mitochondria. The polypeptide is Essential MCU regulator, mitochondrial (Drosophila melanogaster (Fruit fly)).